The chain runs to 330 residues: MKLNLPFNISPHVFVFILSFAFSLILGPVLIPMLTRLKFGQTVRDDGPKTHYKKTGTPTMGGMIFLIPVTVLAAFYAGHDRRILPLIFVTLGFGLIGFIDDFIKVVKKRKDGLYWNQKMFGLLLVAVTFAVYLSHTHTSDIIIPFMGMDKTVSLGWLFVPFVVLVLIASTNAVNITDGLDGLAAGVTLIVTVFFTIVAMTRSEWEYIKMFSAMVAGGCLGFLTFNAYPARIFMGDTGSLALGGAVGAIAILMKMPLILLIVGGIYVVEALSVMIQVLSFKLTGKRVFKMAPIHHHFELSGWKEVKVVLVFWTITVLLCILGFFALRLKFY.

Transmembrane regions (helical) follow at residues 13–33, 58–78, 83–103, 113–133, 152–172, 179–199, 209–229, 231–250, and 304–324; these read VFVF…LIPM, PTMG…FYAG, ILPL…DDFI, LYWN…AVYL, VSLG…STNA, LDGL…IVAM, MFSA…AYPA, IFMG…AIAI, and VKVV…GFFA.

It belongs to the glycosyltransferase 4 family. MraY subfamily. Mg(2+) serves as cofactor.

It localises to the cell membrane. It carries out the reaction UDP-N-acetyl-alpha-D-muramoyl-L-alanyl-gamma-D-glutamyl-meso-2,6-diaminopimeloyl-D-alanyl-D-alanine + di-trans,octa-cis-undecaprenyl phosphate = di-trans,octa-cis-undecaprenyl diphospho-N-acetyl-alpha-D-muramoyl-L-alanyl-D-glutamyl-meso-2,6-diaminopimeloyl-D-alanyl-D-alanine + UMP. It functions in the pathway cell wall biogenesis; peptidoglycan biosynthesis. In terms of biological role, catalyzes the initial step of the lipid cycle reactions in the biosynthesis of the cell wall peptidoglycan: transfers peptidoglycan precursor phospho-MurNAc-pentapeptide from UDP-MurNAc-pentapeptide onto the lipid carrier undecaprenyl phosphate, yielding undecaprenyl-pyrophosphoryl-MurNAc-pentapeptide, known as lipid I. This Acetivibrio thermocellus (strain ATCC 27405 / DSM 1237 / JCM 9322 / NBRC 103400 / NCIMB 10682 / NRRL B-4536 / VPI 7372) (Clostridium thermocellum) protein is Phospho-N-acetylmuramoyl-pentapeptide-transferase.